We begin with the raw amino-acid sequence, 236 residues long: Ubiquinone biosynthesis O-methyltransferase (236 aa).

The S-adenosyl-L-methionine site is built by R36, G56, D77, and M125.

It belongs to the methyltransferase superfamily. UbiG/COQ3 family.

The catalysed reaction is a 3-demethylubiquinol + S-adenosyl-L-methionine = a ubiquinol + S-adenosyl-L-homocysteine + H(+). It catalyses the reaction a 3-(all-trans-polyprenyl)benzene-1,2-diol + S-adenosyl-L-methionine = a 2-methoxy-6-(all-trans-polyprenyl)phenol + S-adenosyl-L-homocysteine + H(+). The protein operates within cofactor biosynthesis; ubiquinone biosynthesis. O-methyltransferase that catalyzes the 2 O-methylation steps in the ubiquinone biosynthetic pathway. This chain is Ubiquinone biosynthesis O-methyltransferase, found in Haemophilus ducreyi (strain 35000HP / ATCC 700724).